The primary structure comprises 137 residues: Large ribosomal subunit protein bL17 (137 aa).

The protein belongs to the bacterial ribosomal protein bL17 family. Part of the 50S ribosomal subunit. Contacts protein L32.

This is Large ribosomal subunit protein bL17 from Caulobacter sp. (strain K31).